The sequence spans 437 residues: Enolase 1 (437 aa).

A Glycyl lysine isopeptide (Lys-Gly) (interchain with G-Cter in ubiquitin) cross-link involves residue lysine 60. 2 positions are modified to phosphoserine: serine 119 and serine 138. Substrate-binding residues include histidine 160 and glutamate 169. Serine 188 carries the phosphoserine modification. Residue glutamate 212 is the Proton donor of the active site. Residue lysine 243 forms a Glycyl lysine isopeptide (Lys-Gly) (interchain with G-Cter in ubiquitin) linkage. Mg(2+) is bound by residues aspartate 247 and glutamate 296. Glutamate 296 provides a ligand contact to substrate. Threonine 313 carries the phosphothreonine modification. Aspartate 321 contributes to the substrate binding site. Mg(2+) is bound at residue aspartate 321. Threonine 324 carries the phosphothreonine modification. Lysine 346 (proton acceptor) is an active-site residue. Residue lysine 358 forms a Glycyl lysine isopeptide (Lys-Gly) (interchain with G-Cter in ubiquitin) linkage. Residues 373 to 376 (SHRS) and lysine 397 each bind substrate.

The protein belongs to the enolase family. As to quaternary structure, homodimer. Mg(2+) serves as cofactor.

The protein resides in the cytoplasm. The enzyme catalyses (2R)-2-phosphoglycerate = phosphoenolpyruvate + H2O. Its pathway is carbohydrate degradation; glycolysis; pyruvate from D-glyceraldehyde 3-phosphate: step 4/5. This chain is Enolase 1 (ENO1), found in Saccharomyces cerevisiae (strain ATCC 204508 / S288c) (Baker's yeast).